The chain runs to 177 residues: Transcription antitermination protein NusB (177 aa).

The segment at 1-36 (MTEQPTKPTGSRPPRQPRTGLTSTGARKAGSKSDRS) is disordered.

The protein belongs to the NusB family.

Its function is as follows. Involved in transcription antitermination. Required for transcription of ribosomal RNA (rRNA) genes. Binds specifically to the boxA antiterminator sequence of the ribosomal RNA (rrn) operons. This is Transcription antitermination protein NusB from Albidiferax ferrireducens (strain ATCC BAA-621 / DSM 15236 / T118) (Rhodoferax ferrireducens).